The sequence spans 463 residues: Ribosomal protein uS12 methylthiotransferase RimO (463 aa).

The region spanning 15-130 is the MTTase N-terminal domain; the sequence is PKVGMVSLGC…VMQVVHSHLP (116 aa). [4Fe-4S] cluster is bound by residues Cys24, Cys60, Cys89, Cys161, Cys165, and Cys168. The Radical SAM core domain maps to 147–392; that stretch reads LTPRHYAYLK…MEVAEEVSAA (246 aa). Residues 395 to 463 form the TRAM domain; that stretch reads ERKVGKTLKV…ADGHDLWGEV (69 aa).

It belongs to the methylthiotransferase family. RimO subfamily. The cofactor is [4Fe-4S] cluster.

It localises to the cytoplasm. It carries out the reaction L-aspartate(89)-[ribosomal protein uS12]-hydrogen + (sulfur carrier)-SH + AH2 + 2 S-adenosyl-L-methionine = 3-methylsulfanyl-L-aspartate(89)-[ribosomal protein uS12]-hydrogen + (sulfur carrier)-H + 5'-deoxyadenosine + L-methionine + A + S-adenosyl-L-homocysteine + 2 H(+). Its function is as follows. Catalyzes the methylthiolation of an aspartic acid residue of ribosomal protein uS12. This Burkholderia thailandensis (strain ATCC 700388 / DSM 13276 / CCUG 48851 / CIP 106301 / E264) protein is Ribosomal protein uS12 methylthiotransferase RimO.